The chain runs to 549 residues: Oxygen-dependent choline dehydrogenase (549 aa).

FAD is bound at residue D4–E33. Residue H465 is the Proton acceptor of the active site.

It belongs to the GMC oxidoreductase family. FAD is required as a cofactor.

The enzyme catalyses choline + A = betaine aldehyde + AH2. It catalyses the reaction betaine aldehyde + NAD(+) + H2O = glycine betaine + NADH + 2 H(+). It participates in amine and polyamine biosynthesis; betaine biosynthesis via choline pathway; betaine aldehyde from choline (cytochrome c reductase route): step 1/1. In terms of biological role, involved in the biosynthesis of the osmoprotectant glycine betaine. Catalyzes the oxidation of choline to betaine aldehyde and betaine aldehyde to glycine betaine at the same rate. This Brucella anthropi (strain ATCC 49188 / DSM 6882 / CCUG 24695 / JCM 21032 / LMG 3331 / NBRC 15819 / NCTC 12168 / Alc 37) (Ochrobactrum anthropi) protein is Oxygen-dependent choline dehydrogenase.